A 245-amino-acid chain; its full sequence is S-methyl-5'-thioinosine phosphorylase (245 aa).

Phosphate contacts are provided by residues threonine 10 and 52 to 53 (RH). Methionine 185 is a binding site for substrate. A phosphate-binding site is contributed by threonine 186. 209–211 (NPA) is a binding site for substrate.

Belongs to the PNP/MTAP phosphorylase family. MTAP subfamily. Homotrimer.

The enzyme catalyses S-methyl-5'-thioinosine + phosphate = 5-(methylsulfanyl)-alpha-D-ribose 1-phosphate + hypoxanthine. The protein operates within purine metabolism; purine nucleoside salvage. Its function is as follows. Catalyzes the reversible phosphorylation of S-methyl-5'-thioinosine (MTI) to hypoxanthine and 5-methylthioribose-1-phosphate. Involved in the breakdown of S-methyl-5'-thioadenosine (MTA), a major by-product of polyamine biosynthesis. Catabolism of (MTA) occurs via deamination to MTI and phosphorolysis to hypoxanthine. Involved in quorum sensing. The sequence is that of S-methyl-5'-thioinosine phosphorylase from Pseudomonas aeruginosa (strain ATCC 15692 / DSM 22644 / CIP 104116 / JCM 14847 / LMG 12228 / 1C / PRS 101 / PAO1).